The sequence spans 505 residues: 2,3-bisphosphoglycerate-independent phosphoglycerate mutase (505 aa).

The Mn(2+) site is built by D12 and S62. Catalysis depends on S62, which acts as the Phosphoserine intermediate. Substrate-binding positions include H123, 153 to 154 (RD), R185, R191, 257 to 260 (RPDR), and K330. 5 residues coordinate Mn(2+): D397, H401, D438, H439, and H456.

This sequence belongs to the BPG-independent phosphoglycerate mutase family. In terms of assembly, monomer. Mn(2+) is required as a cofactor.

It carries out the reaction (2R)-2-phosphoglycerate = (2R)-3-phosphoglycerate. It participates in carbohydrate degradation; glycolysis; pyruvate from D-glyceraldehyde 3-phosphate: step 3/5. Its function is as follows. Catalyzes the interconversion of 2-phosphoglycerate and 3-phosphoglycerate. This Staphylococcus saprophyticus subsp. saprophyticus (strain ATCC 15305 / DSM 20229 / NCIMB 8711 / NCTC 7292 / S-41) protein is 2,3-bisphosphoglycerate-independent phosphoglycerate mutase.